Here is a 606-residue protein sequence, read N- to C-terminus: Aspartate--tRNA(Asp/Asn) ligase (606 aa).

Glutamate 177 contacts L-aspartate. The segment at 201-204 is aspartate; sequence QIFK. Position 223 (arginine 223) interacts with L-aspartate. ATP is bound by residues 223-225 and glutamine 232; that span reads RDE. Position 461 (histidine 461) interacts with L-aspartate. Glutamate 499 contacts ATP. An L-aspartate-binding site is contributed by arginine 506. 551-554 lines the ATP pocket; sequence GLDR.

It belongs to the class-II aminoacyl-tRNA synthetase family. Type 1 subfamily. In terms of assembly, homodimer.

Its subcellular location is the cytoplasm. The enzyme catalyses tRNA(Asx) + L-aspartate + ATP = L-aspartyl-tRNA(Asx) + AMP + diphosphate. Functionally, aspartyl-tRNA synthetase with relaxed tRNA specificity since it is able to aspartylate not only its cognate tRNA(Asp) but also tRNA(Asn). Reaction proceeds in two steps: L-aspartate is first activated by ATP to form Asp-AMP and then transferred to the acceptor end of tRNA(Asp/Asn). The protein is Aspartate--tRNA(Asp/Asn) ligase of Prochlorococcus marinus (strain MIT 9211).